The sequence spans 168 residues: MAAESLPFSFGALSSWELEAWYEDLQEVLSSDENRGTCVSPPGNKEEESKSFTTLDPASLAWLTEEPGPPEVTHTSQSPCSPESSQSSLAQEEEEEDQGRTRKRKQSGQSPARAGKQRMKEKEQENERKVAQLAEENERLKQEIERLTREVEATRRALIDRMVNLHQA.

The interval 10–18 (FGALSSWEL) is interaction with TRIB3. The interval 10–26 (FGALSSWELEAWYEDLQ) is N-terminal. A phosphoserine; by CK2 mark is found at Ser-14, Ser-15, Ser-30, and Ser-31. The segment at 31–141 (SDENRGTCVS…QLAEENERLK (111 aa)) is disordered. A compositionally biased stretch (low complexity) spans 76 to 90 (SQSPCSPESSQSSLA). Residues Ser-78 and Ser-81 each carry the phosphoserine; by MAPK14 modification. A bZIP domain is found at 98-161 (QGRTRKRKQS…EATRRALIDR (64 aa)). The tract at residues 100–129 (RTRKRKQSGQSPARAGKQRMKEKEQENERK) is basic motif. Residues 118–141 (RMKEKEQENERKVAQLAEENERLK) are compositionally biased toward basic and acidic residues. The tract at residues 133–147 (LAEENERLKQEIERL) is leucine-zipper.

The protein belongs to the bZIP family. In terms of assembly, heterodimer. Interacts with TCF7L2/TCF4, EP300/P300, HDAC1, HDAC5 and HDAC6. Interacts with TRIB3 which blocks its association with EP300/P300. Interacts with FOXO3, CEBPB and ATF4. Post-translationally, ubiquitinated, leading to its degradation by the proteasome. In terms of processing, phosphorylation at serine residues by MAPK14 enhances its transcriptional activation activity while phosphorylation at serine residues by CK2 inhibits its transcriptional activation activity.

It is found in the cytoplasm. The protein localises to the nucleus. Multifunctional transcription factor in ER stress response. Plays an essential role in the response to a wide variety of cell stresses and induces cell cycle arrest and apoptosis in response to ER stress. Plays a dual role both as an inhibitor of CCAAT/enhancer-binding protein (C/EBP) function and as an activator of other genes. Acts as a dominant-negative regulator of C/EBP-induced transcription: dimerizes with members of the C/EBP family, impairs their association with C/EBP binding sites in the promoter regions, and inhibits the expression of C/EBP regulated genes. Positively regulates the transcription of TRIB3, IL6, IL8, IL23, TNFRSF10B/DR5, PPP1R15A/GADD34, BBC3/PUMA, BCL2L11/BIM and ERO1L. Negatively regulates; expression of BCL2 and MYOD1, ATF4-dependent transcriptional activation of asparagine synthetase (ASNS), CEBPA-dependent transcriptional activation of hepcidin (HAMP) and CEBPB-mediated expression of peroxisome proliferator-activated receptor gamma (PPARG). Inhibits the canonical Wnt signaling pathway by binding to TCF7L2/TCF4, impairing its DNA-binding properties and repressing its transcriptional activity. Plays a regulatory role in the inflammatory response through the induction of caspase-11 (CASP4/CASP11) which induces the activation of caspase-1 (CASP1) and both these caspases increase the activation of pro-IL1B to mature IL1B which is involved in the inflammatory response. The chain is DNA damage-inducible transcript 3 protein (DDIT3) from Bos taurus (Bovine).